A 360-amino-acid polypeptide reads, in one-letter code: Phosphoserine aminotransferase (360 aa).

Position 42 (arginine 42) interacts with L-glutamate. Pyridoxal 5'-phosphate-binding positions include 76–77 (AR), tryptophan 102, threonine 153, aspartate 172, and glutamine 195. Lysine 196 carries the N6-(pyridoxal phosphate)lysine modification. Position 237–238 (237–238 (NT)) interacts with pyridoxal 5'-phosphate.

The protein belongs to the class-V pyridoxal-phosphate-dependent aminotransferase family. SerC subfamily. As to quaternary structure, homodimer. Requires pyridoxal 5'-phosphate as cofactor.

The protein resides in the cytoplasm. It carries out the reaction O-phospho-L-serine + 2-oxoglutarate = 3-phosphooxypyruvate + L-glutamate. The catalysed reaction is 4-(phosphooxy)-L-threonine + 2-oxoglutarate = (R)-3-hydroxy-2-oxo-4-phosphooxybutanoate + L-glutamate. It participates in amino-acid biosynthesis; L-serine biosynthesis; L-serine from 3-phospho-D-glycerate: step 2/3. It functions in the pathway cofactor biosynthesis; pyridoxine 5'-phosphate biosynthesis; pyridoxine 5'-phosphate from D-erythrose 4-phosphate: step 3/5. Its function is as follows. Catalyzes the reversible conversion of 3-phosphohydroxypyruvate to phosphoserine and of 3-hydroxy-2-oxo-4-phosphonooxybutanoate to phosphohydroxythreonine. This is Phosphoserine aminotransferase from Photobacterium profundum (strain SS9).